Here is an 889-residue protein sequence, read N- to C-terminus: F-BAR domain only protein 1 (889 aa).

The F-BAR domain maps to 1–248; it reads MSYFGEHFWG…NIENVSVEML (248 aa). The tract at residues 1 to 275 is mediates membrane-binding; that stretch reads MSYFGEHFWG…LDFEAYSAAA (275 aa). A coiled-coil region spans residues 156-195; it reads TSQKEMDKAETKTKKAAESLRRSVEKYNSARADFEQKMLD. The segment at 267-442 is mediates interaction with the adaptor protein complex AP-2; it reads DFEAYSAAAL…KNLFGPPLES (176 aa). The interval 294 to 352 is disordered; the sequence is LSRREREPEPPAAVDFLEPDSGTCPEVDEEGFTVRPDVTQNSTAEPSRFSSSDSDFDDE. Phosphoserine is present on residues S295, S347, and S372. The disordered stretch occupies residues 382-596; that stretch reads ATAGSLILPP…SPLGSSAAST (215 aa). The span at 450-469 shows a compositional bias: low complexity; the sequence is TGSSSLGFTSSPSPFSSSSP. A compositionally biased stretch (pro residues) spans 496–511; the sequence is PGTPQSPPSCRAPPPE. Residue S530 is modified to Phosphoserine. Residues 580-596 are compositionally biased toward low complexity; sequence LSRSLSPSPLGSSAAST. The segment at 609-889 is mediates interaction with AGFG1, CALM, DAB2, EPS15, EPS15R, ITSN1 and clathrin; that stretch reads HGVSRGPSPV…FATGMYLVSC (281 aa). Phosphoserine is present on S616. Residues 625–888 enclose the MHD domain; it reads ALPIATAFTE…RFATGMYLVS (264 aa). The disordered stretch occupies residues 826-849; that stretch reads AGGSGRLSASWEPLSGPSTPSPVA.

Belongs to the FCHO family. In terms of assembly, may oligomerize and form homotetramer. Interacts with AP2A2 and AP2B1; 2 subunits of the adaptor protein complex AP-2. Interacts with DAB2. Interacts with clathrin (CLTC or CLTCL1). Interacts with EPS15, EPS15R and ITSN1. Interacts with AGFG1 and CALM. May interact with ACVR1; linking this receptor to clathrin-mediated endocytosis. As to expression, predominantly expressed in lymphoid cells.

The protein localises to the membrane. Its subcellular location is the clathrin-coated pit. Functions in an early step of clathrin-mediated endocytosis. Has both a membrane binding/bending activity and the ability to recruit proteins essential to the formation of functional clathrin-coated pits. May regulate Bmp signaling by regulating clathrin-mediated endocytosis of Bmp receptors. Involved in the regulation of T-cell poliferation and activation. Affects TCR clustering upon receptor triggering and modulates its internalisation, playing a role in TCR-dependent T-cell activation. This Homo sapiens (Human) protein is F-BAR domain only protein 1.